Reading from the N-terminus, the 105-residue chain is Small ribosomal subunit protein uS10 (105 aa).

Belongs to the universal ribosomal protein uS10 family. In terms of assembly, part of the 30S ribosomal subunit.

Involved in the binding of tRNA to the ribosomes. The chain is Small ribosomal subunit protein uS10 from Francisella philomiragia subsp. philomiragia (strain ATCC 25017 / CCUG 19701 / FSC 153 / O#319-036).